Consider the following 459-residue polypeptide: Bifunctional protein GlmU (459 aa).

The pyrophosphorylase stretch occupies residues 1–230; that stretch reads MSNRFAVILA…FDETLGVNDR (230 aa). Residues 9–12, lysine 23, glutamine 73, and 78–79 each bind UDP-N-acetyl-alpha-D-glucosamine; these read LAAG and GT. Residue aspartate 103 coordinates Mg(2+). UDP-N-acetyl-alpha-D-glucosamine-binding residues include glycine 140, glutamate 155, asparagine 170, and asparagine 228. Asparagine 228 contacts Mg(2+). Positions 231 to 251 are linker; sequence VALSQAEIIMKNRINRKNMVN. The N-acetyltransferase stretch occupies residues 252-459; the sequence is GVTIIDPSNT…VDQLLNKKKS (208 aa). Residues arginine 333 and lysine 351 each coordinate UDP-N-acetyl-alpha-D-glucosamine. The active-site Proton acceptor is histidine 363. UDP-N-acetyl-alpha-D-glucosamine-binding residues include tyrosine 366 and asparagine 377. Residues 386-387, alanine 423, and arginine 440 each bind acetyl-CoA; that span reads NY.

In the N-terminal section; belongs to the N-acetylglucosamine-1-phosphate uridyltransferase family. It in the C-terminal section; belongs to the transferase hexapeptide repeat family. In terms of assembly, homotrimer. Mg(2+) is required as a cofactor.

The protein resides in the cytoplasm. It catalyses the reaction alpha-D-glucosamine 1-phosphate + acetyl-CoA = N-acetyl-alpha-D-glucosamine 1-phosphate + CoA + H(+). It carries out the reaction N-acetyl-alpha-D-glucosamine 1-phosphate + UTP + H(+) = UDP-N-acetyl-alpha-D-glucosamine + diphosphate. It participates in nucleotide-sugar biosynthesis; UDP-N-acetyl-alpha-D-glucosamine biosynthesis; N-acetyl-alpha-D-glucosamine 1-phosphate from alpha-D-glucosamine 6-phosphate (route II): step 2/2. It functions in the pathway nucleotide-sugar biosynthesis; UDP-N-acetyl-alpha-D-glucosamine biosynthesis; UDP-N-acetyl-alpha-D-glucosamine from N-acetyl-alpha-D-glucosamine 1-phosphate: step 1/1. Its pathway is bacterial outer membrane biogenesis; LPS lipid A biosynthesis. Its function is as follows. Catalyzes the last two sequential reactions in the de novo biosynthetic pathway for UDP-N-acetylglucosamine (UDP-GlcNAc). The C-terminal domain catalyzes the transfer of acetyl group from acetyl coenzyme A to glucosamine-1-phosphate (GlcN-1-P) to produce N-acetylglucosamine-1-phosphate (GlcNAc-1-P), which is converted into UDP-GlcNAc by the transfer of uridine 5-monophosphate (from uridine 5-triphosphate), a reaction catalyzed by the N-terminal domain. This is Bifunctional protein GlmU from Bacillus cereus (strain ZK / E33L).